The following is a 354-amino-acid chain: Holliday junction branch migration complex subunit RuvB (354 aa).

Residues 4–190 (TDKLAAERII…FGIVARLEFY (187 aa)) form a large ATPase domain (RuvB-L) region. ATP-binding positions include L29, R30, G71, K74, T75, T76, 137 to 139 (EDY), R180, Y190, and R227. T75 is a Mg(2+) binding site. Residues 191-261 (NAEELARIVT…VADAALKMLD (71 aa)) are small ATPAse domain (RuvB-S). The interval 264–354 (AVGFDLMDRK…LPGLWDSAAT (91 aa)) is head domain (RuvB-H). 3 residues coordinate DNA: R300, R319, and R324.

The protein belongs to the RuvB family. In terms of assembly, homohexamer. Forms an RuvA(8)-RuvB(12)-Holliday junction (HJ) complex. HJ DNA is sandwiched between 2 RuvA tetramers; dsDNA enters through RuvA and exits via RuvB. An RuvB hexamer assembles on each DNA strand where it exits the tetramer. Each RuvB hexamer is contacted by two RuvA subunits (via domain III) on 2 adjacent RuvB subunits; this complex drives branch migration. In the full resolvosome a probable DNA-RuvA(4)-RuvB(12)-RuvC(2) complex forms which resolves the HJ.

It localises to the cytoplasm. The catalysed reaction is ATP + H2O = ADP + phosphate + H(+). The RuvA-RuvB-RuvC complex processes Holliday junction (HJ) DNA during genetic recombination and DNA repair, while the RuvA-RuvB complex plays an important role in the rescue of blocked DNA replication forks via replication fork reversal (RFR). RuvA specifically binds to HJ cruciform DNA, conferring on it an open structure. The RuvB hexamer acts as an ATP-dependent pump, pulling dsDNA into and through the RuvAB complex. RuvB forms 2 homohexamers on either side of HJ DNA bound by 1 or 2 RuvA tetramers; 4 subunits per hexamer contact DNA at a time. Coordinated motions by a converter formed by DNA-disengaged RuvB subunits stimulates ATP hydrolysis and nucleotide exchange. Immobilization of the converter enables RuvB to convert the ATP-contained energy into a lever motion, pulling 2 nucleotides of DNA out of the RuvA tetramer per ATP hydrolyzed, thus driving DNA branch migration. The RuvB motors rotate together with the DNA substrate, which together with the progressing nucleotide cycle form the mechanistic basis for DNA recombination by continuous HJ branch migration. Branch migration allows RuvC to scan DNA until it finds its consensus sequence, where it cleaves and resolves cruciform DNA. The protein is Holliday junction branch migration complex subunit RuvB of Paraburkholderia phytofirmans (strain DSM 17436 / LMG 22146 / PsJN) (Burkholderia phytofirmans).